Consider the following 471-residue polypeptide: Trigger factor (471 aa).

One can recognise a PPIase FKBP-type domain in the interval 165–244; it reads GDFVSIDLRA…VQSVKERVLP (80 aa). The disordered stretch occupies residues 407–471; it reads VTDASGNPVD…EATAEDPAKS (65 aa). A compositionally biased stretch (acidic residues) spans 416–443; that stretch reads DLEELVGGTEEDDVTEDATEDVTEDAAP.

The protein belongs to the FKBP-type PPIase family. Tig subfamily.

Its subcellular location is the cytoplasm. The catalysed reaction is [protein]-peptidylproline (omega=180) = [protein]-peptidylproline (omega=0). Functionally, involved in protein export. Acts as a chaperone by maintaining the newly synthesized protein in an open conformation. Functions as a peptidyl-prolyl cis-trans isomerase. This chain is Trigger factor, found in Kineococcus radiotolerans (strain ATCC BAA-149 / DSM 14245 / SRS30216).